We begin with the raw amino-acid sequence, 454 residues long: Chromosomal replication initiator protein DnaA (454 aa).

Residues Met-1 to Tyr-79 form a domain I, interacts with DnaA modulators region. The interval Tyr-79 to Ser-117 is domain II. The segment at Asn-118 to Ala-334 is domain III, AAA+ region. ATP-binding residues include Gly-162, Gly-164, Lys-165, and Thr-166. A domain IV, binds dsDNA region spans residues Asn-335–Val-454.

This sequence belongs to the DnaA family. Oligomerizes as a right-handed, spiral filament on DNA at oriC.

Its subcellular location is the cytoplasm. In terms of biological role, plays an essential role in the initiation and regulation of chromosomal replication. ATP-DnaA binds to the origin of replication (oriC) to initiate formation of the DNA replication initiation complex once per cell cycle. Binds the DnaA box (a 9 base pair repeat at the origin) and separates the double-stranded (ds)DNA. Forms a right-handed helical filament on oriC DNA; dsDNA binds to the exterior of the filament while single-stranded (ss)DNA is stabiized in the filament's interior. The ATP-DnaA-oriC complex binds and stabilizes one strand of the AT-rich DNA unwinding element (DUE), permitting loading of DNA polymerase. After initiation quickly degrades to an ADP-DnaA complex that is not apt for DNA replication. Binds acidic phospholipids. In Buchnera aphidicola subsp. Schizaphis graminum (strain Sg), this protein is Chromosomal replication initiator protein DnaA.